A 289-amino-acid chain; its full sequence is Serine/threonine-protein phosphatase Pgam5, mitochondrial (289 aa).

Residues 7–23 traverse the membrane as a helical segment; it reads FACGTGAGLAAYYLQKL.

Belongs to the phosphoglycerate mutase family. BPG-dependent PGAM subfamily. As to quaternary structure, interacts with Pk92B/ASK1.

It is found in the mitochondrion outer membrane. It catalyses the reaction O-phospho-L-seryl-[protein] + H2O = L-seryl-[protein] + phosphate. The catalysed reaction is O-phospho-L-threonyl-[protein] + H2O = L-threonyl-[protein] + phosphate. Functionally, displays phosphatase activity for serine/threonine residues, and dephosphorylates and activates Pk92B kinase. Has apparently no phosphoglycerate mutase activity. In Drosophila virilis (Fruit fly), this protein is Serine/threonine-protein phosphatase Pgam5, mitochondrial.